A 205-amino-acid chain; its full sequence is ATP phosphoribosyltransferase (205 aa).

It belongs to the ATP phosphoribosyltransferase family. Short subfamily. In terms of assembly, heteromultimer composed of HisG and HisZ subunits.

The protein localises to the cytoplasm. It carries out the reaction 1-(5-phospho-beta-D-ribosyl)-ATP + diphosphate = 5-phospho-alpha-D-ribose 1-diphosphate + ATP. It participates in amino-acid biosynthesis; L-histidine biosynthesis; L-histidine from 5-phospho-alpha-D-ribose 1-diphosphate: step 1/9. Catalyzes the condensation of ATP and 5-phosphoribose 1-diphosphate to form N'-(5'-phosphoribosyl)-ATP (PR-ATP). Has a crucial role in the pathway because the rate of histidine biosynthesis seems to be controlled primarily by regulation of HisG enzymatic activity. The protein is ATP phosphoribosyltransferase of Staphylococcus carnosus (strain TM300).